The following is a 2167-amino-acid chain: Glutamate synthase 1 [NADH], chloroplastic (2167 aa).

The interval 1-31 (MSAAQGMAYKLRTDAAPTGAGRRARRSHSSV) is disordered. Residues 1–36 (MSAAQGMAYKLRTDAAPTGAGRRARRSHSSVAAPYR) constitute a chloroplast transit peptide. Residue Cys-100 is the Nucleophile of the active site. The Glutamine amidotransferase type-2 domain occupies 100 to 504 (CGVGFVAELS…PGMMLLVDFE (405 aa)). The tract at residues 1022-1042 (KSNTGEGGEQPSRMEPLANGS) is disordered. Residue 1192-1249 (LAETHQTLVANGLRGRAILQTDGQLKTGKDVAVACLLGAEEFGFSTAPLITLGCIMMR) coordinates FMN. Residues Cys-1245, Cys-1251, and Cys-1256 each contribute to the [3Fe-4S] cluster site. 1956 to 1970 (GGGDTGTDCIGTSIR) serves as a coordination point for NAD(+).

This sequence belongs to the glutamate synthase family. Monomer. Requires [3Fe-4S] cluster as cofactor. It depends on FAD as a cofactor. FMN is required as a cofactor. Highly expressed in roots.

The protein localises to the plastid. Its subcellular location is the chloroplast. The enzyme catalyses 2 L-glutamate + NAD(+) = L-glutamine + 2-oxoglutarate + NADH + H(+). It functions in the pathway amino-acid biosynthesis; L-glutamate biosynthesis via GLT pathway; L-glutamate from 2-oxoglutarate and L-glutamine (NAD(+) route): step 1/1. Its pathway is energy metabolism; nitrogen metabolism. Its function is as follows. Involved in glutamate biosynthesis and plays a major role in the primary ammonium ions assimilation in seedling roots. May be involved in the reutilization of glutamine in developing organs. Plays a role in the development of tillers. The sequence is that of Glutamate synthase 1 [NADH], chloroplastic from Oryza sativa subsp. japonica (Rice).